Here is a 95-residue protein sequence, read N- to C-terminus: Translation initiation factor 1A (95 aa).

One can recognise an S1-like domain in the interval 6–80 (SRKNLRMPEE…EKADITWRYE (75 aa)).

This sequence belongs to the eIF-1A family.

Seems to be required for maximal rate of protein biosynthesis. Enhances ribosome dissociation into subunits and stabilizes the binding of the initiator Met-tRNA(I) to 40 S ribosomal subunits. In Haloarcula marismortui (strain ATCC 43049 / DSM 3752 / JCM 8966 / VKM B-1809) (Halobacterium marismortui), this protein is Translation initiation factor 1A.